Consider the following 344-residue polypeptide: Putative NAD(P)H nitroreductase MT3217 (344 aa).

Residues glutamine 40–tryptophan 44 and arginine 326 each bind FMN.

The protein belongs to the nitroreductase family. As to quaternary structure, interacts with human TLR2. The cofactor is FMN.

Functionally, stimulates pro-inflammatory cytokine expression via TLR2 signaling pathway. Activation of TLR2 results in the phosphorylation and activation of NF-kappa-B. Also induces TLR2 expression. May influence the innate immune responses to facilitate the survival of M.tuberculosis in the granulomatous microenvironment. The protein is Putative NAD(P)H nitroreductase MT3217 of Mycobacterium tuberculosis (strain CDC 1551 / Oshkosh).